Reading from the N-terminus, the 579-residue chain is V-type ATP synthase alpha chain (579 aa).

227–234 (GGFGTGKT) provides a ligand contact to ATP.

This sequence belongs to the ATPase alpha/beta chains family.

The enzyme catalyses ATP + H2O + 4 H(+)(in) = ADP + phosphate + 5 H(+)(out). Produces ATP from ADP in the presence of a proton gradient across the membrane. The V-type alpha chain is a catalytic subunit. This Anaeromyxobacter dehalogenans (strain 2CP-C) protein is V-type ATP synthase alpha chain.